A 229-amino-acid polypeptide reads, in one-letter code: MAEKKAEKRAEKRKFNTEAWEPKTQIGRMVKEGTISDINYIMDKGLPLLEPEIVDALLPDLEEQVLDVKLVQRMHKSGRRARYRATVVVGNKNGYVGVGMGKSKEVGPAIRKAIAHAKLSLIKVRVGCGSWECGCGSPHSIPFTAKGACGSVKVELLPAPRGVGLVAGNVAKAVLGLAGIKDAWTKTFGDTRTTYNFAEATFDALNNLNFVRCLPAQKEKLGLTEGRVL.

Residues Leu61–Val124 enclose the S5 DRBM domain.

Belongs to the universal ribosomal protein uS5 family. As to quaternary structure, part of the 30S ribosomal subunit. Contacts protein S4.

Functionally, with S4 and S12 plays an important role in translational accuracy. The polypeptide is Small ribosomal subunit protein uS5 (Methanococcus maripaludis (strain C6 / ATCC BAA-1332)).